Consider the following 470-residue polypeptide: Xaa-Pro aminopeptidase 2 (470 aa).

Positions 287, 299, 382, 413, and 437 each coordinate Mn(2+).

It belongs to the peptidase M24B family. In terms of assembly, homodimer. Mn(2+) is required as a cofactor.

The catalysed reaction is Release of any N-terminal amino acid, including proline, that is linked to proline, even from a dipeptide or tripeptide.. This chain is Xaa-Pro aminopeptidase 2 (pepP2), found in Streptomyces coelicolor (strain ATCC BAA-471 / A3(2) / M145).